We begin with the raw amino-acid sequence, 296 residues long: Giardin subunit alpha-2 (296 aa).

4 Annexin repeats span residues 2–71, 73–143, 153–223, and 226–293; these read PKLS…MDLF, DRHE…MEKW, GSPD…AHFA, and GMHK…TLWR.

The protein belongs to the annexin family. Giardin subunit alpha subfamily.

It localises to the cytoplasm. The protein resides in the cytoskeleton. Giardins are involved in parasite attachment to the intestinal mucosa and in the cytoskeletal disassembly and reassembly that marks the transition from infectious trophozoite to transmissible cyst. They may interact with other cytoskeletal proteins such as microtubules in the microribbons or crossbridges, to maintain the integrity of the ventral disk. This Giardia intestinalis (Giardia lamblia) protein is Giardin subunit alpha-2.